The sequence spans 573 residues: MLO-like protein 11 (573 aa).

Residues 1–19 (MGEGEENGNEADSNERSLA) are Extracellular-facing. Residues 20–40 (LSPTWSVAIVLTVFVVVSLIV) form a helical membrane-spanning segment. At 41–69 (ERSIYRLSTWLRKTKRKPMFAALEKMKEE) the chain is on the cytoplasmic side. Residues 70–90 (LMLLGFISLLLTATSSTIANI) form a helical membrane-spanning segment. The Extracellular portion of the chain corresponds to 91-163 (CVPSSFYNDR…SYEGLEQLHR (73 aa)). A helical membrane pass occupies residues 164 to 184 (FIFIMAVTHVTYSCLTMLLAI). Over 185–287 (VKIHSWRIWE…IRSMEEEFQR (103 aa)) the chain is Cytoplasmic. The next 2 helical transmembrane spans lie at 288 to 308 (IVGVSGPLWGFVVAFMLFNIK) and 309 to 329 (GSNLYFWIAIIPVTLVLLVGA). Over 330-371 (KLQHVIATLALENAGLTEYPSGVKLRPRDELFWFNKPELLLS) the chain is Cytoplasmic. A helical transmembrane segment spans residues 372–392 (LIHFILFQNSFELASFFWFWW). The Extracellular segment spans residues 393 to 411 (QFGYSSCFLKNHYLVYFRL). The helical transmembrane segment at 412-432 (LLGFAGQFLCSYSTLPLYALV) threads the bilayer. Residues 433–573 (TQMGTNYKAA…SSSLPSEKRV (141 aa)) are Cytoplasmic-facing. The calmodulin-binding stretch occupies residues 446–467 (QRIRETIRGWGKATRRKRRHGL). Disordered regions lie at residues 500-532 (EQQRKQQEQGTTELELQPIQPRNDCVPNDTSSR) and 554-573 (RSEPMETLSRSSSLPSEKRV). Low complexity predominate over residues 507 to 516 (EQGTTELELQ). Polar residues predominate over residues 561 to 573 (LSRSSSLPSEKRV).

The protein belongs to the MLO family.

Its subcellular location is the membrane. Its function is as follows. May be involved in modulation of pathogen defense and leaf cell death. Activity seems to be regulated by Ca(2+)-dependent calmodulin binding and seems not to require heterotrimeric G proteins. This Arabidopsis thaliana (Mouse-ear cress) protein is MLO-like protein 11 (MLO11).